We begin with the raw amino-acid sequence, 426 residues long: Histidine--tRNA ligase (426 aa).

Belongs to the class-II aminoacyl-tRNA synthetase family. As to quaternary structure, homodimer.

It localises to the cytoplasm. It catalyses the reaction tRNA(His) + L-histidine + ATP = L-histidyl-tRNA(His) + AMP + diphosphate + H(+). The protein is Histidine--tRNA ligase of Lactiplantibacillus plantarum (strain ATCC BAA-793 / NCIMB 8826 / WCFS1) (Lactobacillus plantarum).